The following is a 149-amino-acid chain: UPF0178 protein Psyc_0274 (149 aa).

This sequence belongs to the UPF0178 family.

This Psychrobacter arcticus (strain DSM 17307 / VKM B-2377 / 273-4) protein is UPF0178 protein Psyc_0274.